Here is a 122-residue protein sequence, read N- to C-terminus: Large ribosomal subunit protein uL14c (122 aa).

It belongs to the universal ribosomal protein uL14 family. In terms of assembly, part of the 50S ribosomal subunit.

The protein resides in the plastid. It localises to the chloroplast. Binds to 23S rRNA. The chain is Large ribosomal subunit protein uL14c from Staurastrum punctulatum (Green alga).